Consider the following 102-residue polypeptide: Large ribosomal subunit protein uL24 (102 aa).

It belongs to the universal ribosomal protein uL24 family. Part of the 50S ribosomal subunit.

Its function is as follows. One of two assembly initiator proteins, it binds directly to the 5'-end of the 23S rRNA, where it nucleates assembly of the 50S subunit. One of the proteins that surrounds the polypeptide exit tunnel on the outside of the subunit. The protein is Large ribosomal subunit protein uL24 of Alkaliphilus oremlandii (strain OhILAs) (Clostridium oremlandii (strain OhILAs)).